The chain runs to 224 residues: MAIADWPAHERPREKLLTQGPAALSDAELLAIFLRVGMPGKSAVDLARELLAHFGSLGRLCHASRREFSAIHGMGPAKYAQLHALLEVARRALKEEIAYGQTLESPQSVKDFLRLTLGHRPQEVFACLFLDVRHRLIAWEELFQGTLTEARVYPREIAKRALHHNASALILSHNHPTGHVEPSESDLVLTRELCRALALLDVRVLDHMIVGRAEVYSFLEHGKM.

The 123-residue stretch at Thr102–Met224 folds into the MPN domain. Positions 173, 175, and 186 each coordinate Zn(2+). The JAMM motif motif lies at His173–Asp186.

The protein belongs to the UPF0758 family.

In Ralstonia nicotianae (strain ATCC BAA-1114 / GMI1000) (Ralstonia solanacearum), this protein is UPF0758 protein RSc2444.